The sequence spans 176 residues: ATP-dependent protease subunit HslV (176 aa).

The active site involves T5. Positions 161, 164, and 167 each coordinate Na(+).

This sequence belongs to the peptidase T1B family. HslV subfamily. As to quaternary structure, a double ring-shaped homohexamer of HslV is capped on each side by a ring-shaped HslU homohexamer. The assembly of the HslU/HslV complex is dependent on binding of ATP.

It is found in the cytoplasm. The catalysed reaction is ATP-dependent cleavage of peptide bonds with broad specificity.. Its activity is regulated as follows. Allosterically activated by HslU binding. Its function is as follows. Protease subunit of a proteasome-like degradation complex believed to be a general protein degrading machinery. The protein is ATP-dependent protease subunit HslV of Thermoanaerobacter sp. (strain X514).